Here is a 145-residue protein sequence, read N- to C-terminus: Large ribosomal subunit protein uL11 (145 aa).

The protein belongs to the universal ribosomal protein uL11 family. As to quaternary structure, part of the ribosomal stalk of the 50S ribosomal subunit. Interacts with L10 and the large rRNA to form the base of the stalk. L10 forms an elongated spine to which L12 dimers bind in a sequential fashion forming a multimeric L10(L12)X complex. One or more lysine residues are methylated.

Forms part of the ribosomal stalk which helps the ribosome interact with GTP-bound translation factors. The chain is Large ribosomal subunit protein uL11 from Hydrogenobaculum sp. (strain Y04AAS1).